Here is a 208-residue protein sequence, read N- to C-terminus: TnpB-like protein MJ0012 (208 aa).

The Zn(2+) site is built by cysteine 83, cysteine 86, cysteine 100, and cysteine 103.

Belongs to the transposase 35 family.

The polypeptide is TnpB-like protein MJ0012 (Methanocaldococcus jannaschii (strain ATCC 43067 / DSM 2661 / JAL-1 / JCM 10045 / NBRC 100440) (Methanococcus jannaschii)).